A 745-amino-acid polypeptide reads, in one-letter code: Prolyl oligopeptidase ophP (745 aa).

Catalysis depends on charge relay system residues Ser-580, Asp-665, and His-701.

This sequence belongs to the peptidase S9A family. Monomer.

The enzyme catalyses Hydrolysis of Pro-|-Xaa &gt;&gt; Ala-|-Xaa in oligopeptides.. It functions in the pathway mycotoxin biosynthesis. Prolyl oligopeptidase; part of the gene cluster that mediates the biosynthesis of omphalotin A, a highly methylated cyclic dodecapeptide with nematodicidal activity. Excises and catalyzes the macrocyclization of the methylated core peptide of OphMA to yield omphalotin A. OphP works in a two-step fashion with an initial cleavage at the N-terminus, followed by a second cleavage at the C-terminus of the core peptide. According to this mechanism, the free N-terminus of the core peptide, generated by the first cleavage, attacks the covalent intermediate of the second cleavage, which results in macrocyclization of the core peptide. In Omphalotus olearius (Jack o'lantern), this protein is Prolyl oligopeptidase ophP.